The sequence spans 1247 residues: Structural polyprotein (1247 aa).

Positions 36 to 67 (RPAGQLAQLISAVSRLALRTVPQKPRRTRKIK) are host transcription inhibition. A disordered region spans residues 53 to 103 (LRTVPQKPRRTRKIKKQKQVKQEQQSTRNQKKKAPKQKQTQKKKRPGRRER). 2 stretches are compositionally biased toward basic residues: residues 59-71 (KPRRTRKIKKQKQ) and 81-100 (NQKKKAPKQKQTQKKKRPGR). The Nuclear localization signal signature appears at 60–98 (PRRTRKIKKQKQVKQEQQSTRNQKKKAPKQKQTQKKKRP). A binding to the viral RNA region spans residues 83 to 113 (KKKAPKQKQTQKKKRPGRRERMCMKIENDCI). A ribosome-binding region spans residues 98–112 (PGRRERMCMKIENDC). Cysteines 112 and 127 form a disulfide. The 149-residue stretch at 112–260 (CIFEVKHEGK…KITPEGSVEW (149 aa)) folds into the Peptidase S3 domain. His138 functions as the Charge relay system in the catalytic mechanism. Positions 143–153 (IDNADLAKLAF) match the Nuclear export signal motif. The interaction with spike glycoprotein E2 stretch occupies residues 154-159 (KRSSKY). The Charge relay system role is filled by Asp160. The segment at 182–192 (PEGYYNWHHGA) is dimerization of the capsid protein. Ser212 functions as the Charge relay system in the catalytic mechanism. Residues 218-222 (DNKGR) are dimerization of the capsid protein. Residues 261-273 (SLALPVMCLLANT) are functions as an uncleaved signal peptide for the precursor of protein E3/E2. 9 disulfides stabilise this stretch: Cys268–Cys277, Cys282–Cys286, Cys285–Cys317, Cys343–Cys449, Cys346–Cys352, Cys415–Cys429, Cys477–Cys590, Cys525–Cys549, and Cys527–Cys544. An N-linked (GlcNAc...) asparagine; by host glycan is attached at Asn272. Topologically, residues 325–691 (NARENFNVYK…YYYELYPTTT (367 aa)) are extracellular. Asn587 carries N-linked (GlcNAc...) asparagine; by host glycosylation. Residues 692–712 (IAVLAAASIVVASLVGLSLGM) traverse the membrane as a helical segment. The Cytoplasmic portion of the chain corresponds to 713-747 (CICARRRCITPYELTPGATIPFLLGILCCVKTAKA). The segment at 715–719 (CARRR) is interaction with the capsid protein. 3 S-palmitoyl cysteine; by host lipidation sites follow: Cys720, Cys740, and Cys741. Residues 720 to 740 (CITPYELTPGATIPFLLGILC) form a transient transmembrane before p62-6K protein processing region. A disulfide bond links Cys720 and Cys741. Residues 748 to 762 (ASYYEAATYLWNEQQ) are Extracellular-facing. A helical transmembrane segment spans residues 763–783 (PLFWLQLLIPLSAAIVVCNCL). The Cytoplasmic segment spans residues 784-787 (KLLP). The helical transmembrane segment at 788-808 (CCCKTLTFLAVMSIGARTVSA) threads the bilayer. At 809-1223 (YEHATVIPNT…AMSWVQKITG (415 aa)) the chain is on the extracellular side. 4 cysteine pairs are disulfide-bonded: Cys857-Cys922, Cys870-Cys902, Cys871-Cys904, and Cys876-Cys886. An E1 fusion peptide loop region spans residues 892–909 (VYPFMWGGAYCFCDAENT). N-linked (GlcNAc...) asparagine; by host glycans are attached at residues Asn949 and Asn1078. Intrachain disulfides connect Cys1067–Cys1079, Cys1109–Cys1184, Cys1114–Cys1188, and Cys1136–Cys1178. The helical transmembrane segment at 1224–1244 (GVGLVVAIAALILIIVLCVSF) threads the bilayer. Cys1241 is lipidated: S-palmitoyl cysteine; by host. Over 1245–1247 (SRH) the chain is Cytoplasmic.

In terms of assembly, homodimer. Homomultimer. Interacts with host karyopherin KPNA4; this interaction allows the nuclear import of the viral capsid protein. Interacts with spike glycoprotein E2. Interacts with host IRAK1; the interaction leads to inhibition of IRAK1-dependent signaling. The precursor of protein E3/E2 and E1 form a heterodimer shortly after synthesis. As to quaternary structure, the precursor of protein E3/E2 and E1 form a heterodimer shortly after synthesis. Processing of the precursor of protein E3/E2 into E2 and E3 results in a heterodimer of the spike glycoproteins E2 and E1. Spike at virion surface are constituted of three E2-E1 heterodimers. After target cell attachment and endocytosis, E1 change conformation to form homotrimers. Interacts with 6K protein. In terms of assembly, interacts with spike glycoprotein E1. Processing of the precursor of protein E3/E2 into E2 and E3 results in a heterodimer of the spike glycoproteins E2 and E1. Spike at virion surface are constituted of a trimer of E2-E1 heterodimers. Interacts with 6K protein. Interacts with host MXRA8; this interaction mediates virus entry. Oligomer. Interacts with spike glycoprotein E1. Interacts with spike glycoprotein E2. Post-translationally, structural polyprotein: Specific enzymatic cleavages in vivo yield mature proteins. Capsid protein is auto-cleaved during polyprotein translation, unmasking a signal peptide at the N-terminus of the precursor of E3/E2. The remaining polyprotein is then targeted to the host endoplasmic reticulum, where host signal peptidase cleaves it into pE2, 6K and E1 proteins. pE2 is further processed to mature E3 and E2 by host furin in trans-Golgi vesicle. In terms of processing, palmitoylated via thioester bonds. These palmitoylations may induce disruption of the C-terminus transmembrane. This would result in the reorientation of E2 C-terminus from lumenal to cytoplasmic side. N-glycosylated. Post-translationally, palmitoylated via thioester bonds.

Its subcellular location is the virion. The protein resides in the host cytoplasm. The protein localises to the host cell membrane. It is found in the host nucleus. It localises to the virion membrane. Its subcellular location is the host Golgi apparatus. The protein resides in the host trans-Golgi network. The protein localises to the host endoplasmic reticulum. It catalyses the reaction Autocatalytic release of the core protein from the N-terminus of the togavirus structural polyprotein by hydrolysis of a -Trp-|-Ser- bond.. Functionally, forms an icosahedral capsid with a T=4 symmetry composed of 240 copies of the capsid protein surrounded by a lipid membrane through which penetrate 80 spikes composed of trimers of E1-E2 heterodimers. The capsid protein binds to the viral RNA genome at a site adjacent to a ribosome binding site for viral genome translation following genome release. Possesses a protease activity that results in its autocatalytic cleavage from the nascent structural protein. Following its self-cleavage, the capsid protein transiently associates with ribosomes, and within several minutes the protein binds to viral RNA and rapidly assembles into icosahedric core particles. The resulting nucleocapsid eventually associates with the cytoplasmic domain of the spike glycoprotein E2 at the cell membrane, leading to budding and formation of mature virions. In case of infection, new virions attach to target cells and after clathrin-mediated endocytosis their membrane fuses with the host endosomal membrane. This leads to the release of the nucleocapsid into the cytoplasm, followed by an uncoating event necessary for the genomic RNA to become accessible. The uncoating might be triggered by the interaction of capsid proteins with ribosomes. Binding of ribosomes would release the genomic RNA since the same region is genomic RNA-binding and ribosome-binding. Specifically inhibits interleukin-1 receptor-associated kinase 1/IRAK1-dependent signaling during viral entry, representing a means by which the alphaviruses may evade innate immune detection and activation prior to viral gene expression. In terms of biological role, provides the signal sequence for the translocation of the precursor of protein E3/E2 to the host endoplasmic reticulum. Furin-cleaved E3 remains associated with spike glycoprotein E1 and mediates pH protection of the latter during the transport via the secretory pathway. After virion release from the host cell, the assembly protein E3 is gradually released in the extracellular space. Plays a role in viral attachment to target host cell, by binding to the cell receptor MXRA8. Synthesized as a p62 precursor which is processed by furin at the cell membrane just before virion budding, giving rise to E2-E1 heterodimer. The p62-E1 heterodimer is stable, whereas E2-E1 is unstable and dissociate at low pH. p62 is processed at the last step, presumably to avoid E1 fusion activation before its final export to cell surface. E2 C-terminus contains a transitory transmembrane that would be disrupted by palmitoylation, resulting in reorientation of the C-terminal tail from lumenal to cytoplasmic side. This step is critical since E2 C-terminus is involved in budding by interacting with capsid proteins. This release of E2 C-terminus in cytoplasm occurs lately in protein export, and precludes premature assembly of particles at the endoplasmic reticulum membrane. Its function is as follows. Acts as a viroporin that participates in virus glycoprotein processing and transport to the plasma membrane, cell permeabilization and budding of viral particles. Disrupts the calcium homeostasis of the cell, probably at the endoplasmic reticulum level. This leads to cytoplasmic calcium elevation. Because of its lipophilic properties, the 6K protein is postulated to influence the selection of lipids that interact with the transmembrane domains of the glycoproteins, which, in turn, affects the deformability of the bilayer required for the extreme curvature that occurs as budding proceeds. Present in low amount in virions, about 3% compared to viral glycoproteins. Functionally, class II viral fusion protein. Fusion activity is inactive as long as E1 is bound to E2 in mature virion. After virus attachment to target cell via host MXRA8 and endocytosis, acidification of the endosome induce dissociation of E1/E2 heterodimer and concomitant trimerization of the E1 subunits. This E1 trimer is fusion active, and promotes release of viral nucleocapsid in cytoplasm after endosome and viral membrane fusion. Efficient fusion requires the presence of cholesterol and sphingolipid in the target membrane. This chain is Structural polyprotein, found in Anopheles (Human).